The sequence spans 498 residues: Type VI secretion system sheath protein TssC1 (498 aa).

As to quaternary structure, forms a heterodimer with TssB1. Heterodimers assemble to form the sheath of the T6SS machinery. Interacts with TssA1.

Functionally, core component of the H1 type VI (H1-T6SS) secretion system that plays a role in the release of toxins targeting both eukaryotic and prokaryotic species. Forms the sheath of the structure by assembling into tubules together with TssB1 resulting in the stacking of cogwheel-like structures showing predominantly a 12-fold symmetry. The sheath contracts to provide the energy needed for effector delivery. The sequence is that of Type VI secretion system sheath protein TssC1 from Pseudomonas aeruginosa (strain ATCC 15692 / DSM 22644 / CIP 104116 / JCM 14847 / LMG 12228 / 1C / PRS 101 / PAO1).